We begin with the raw amino-acid sequence, 201 residues long: Peptidyl-tRNA hydrolase (201 aa).

Position 14 (Tyr14) interacts with tRNA. Catalysis depends on His19, which acts as the Proton acceptor. Tyr64, Asn66, and Asn112 together coordinate tRNA.

Belongs to the PTH family. As to quaternary structure, monomer.

It is found in the cytoplasm. It carries out the reaction an N-acyl-L-alpha-aminoacyl-tRNA + H2O = an N-acyl-L-amino acid + a tRNA + H(+). Functionally, hydrolyzes ribosome-free peptidyl-tRNAs (with 1 or more amino acids incorporated), which drop off the ribosome during protein synthesis, or as a result of ribosome stalling. Its function is as follows. Catalyzes the release of premature peptidyl moieties from peptidyl-tRNA molecules trapped in stalled 50S ribosomal subunits, and thus maintains levels of free tRNAs and 50S ribosomes. This is Peptidyl-tRNA hydrolase from Rhodopseudomonas palustris (strain BisB18).